The primary structure comprises 166 residues: Large ribosomal subunit protein uL18c (166 aa).

Residues 1-44 (MAAATSLSFFHSTLASSSSSSVQQLSLPPKFVNFRPQTLPLIQA) constitute a chloroplast transit peptide.

The protein belongs to the universal ribosomal protein uL18 family. In terms of assembly, component of the chloroplast large ribosomal subunit (LSU). Mature 70S chloroplast ribosomes of higher plants consist of a small (30S) and a large (50S) subunit. The 30S small subunit contains 1 molecule of ribosomal RNA (16S rRNA) and 24 different proteins. The 50S large subunit contains 3 rRNA molecules (23S, 5S and 4.5S rRNA) and 33 different proteins.

Its subcellular location is the plastid. The protein localises to the chloroplast. Its function is as follows. Component of the chloroplast ribosome (chloro-ribosome), a dedicated translation machinery responsible for the synthesis of chloroplast genome-encoded proteins, including proteins of the transcription and translation machinery and components of the photosynthetic apparatus. This is Large ribosomal subunit protein uL18c (RPL18) from Spinacia oleracea (Spinach).